A 149-amino-acid polypeptide reads, in one-letter code: 3-hydroxyacyl-[acyl-carrier-protein] dehydratase FabZ (149 aa).

Histidine 53 is an active-site residue.

Belongs to the thioester dehydratase family. FabZ subfamily.

Its subcellular location is the cytoplasm. The enzyme catalyses a (3R)-hydroxyacyl-[ACP] = a (2E)-enoyl-[ACP] + H2O. Its function is as follows. Involved in unsaturated fatty acids biosynthesis. Catalyzes the dehydration of short chain beta-hydroxyacyl-ACPs and long chain saturated and unsaturated beta-hydroxyacyl-ACPs. The chain is 3-hydroxyacyl-[acyl-carrier-protein] dehydratase FabZ from Polynucleobacter necessarius subsp. necessarius (strain STIR1).